We begin with the raw amino-acid sequence, 107 residues long: Nucleoid-associated protein BT_0257 (107 aa).

The protein belongs to the YbaB/EbfC family. In terms of assembly, homodimer.

Its subcellular location is the cytoplasm. It is found in the nucleoid. Its function is as follows. Binds to DNA and alters its conformation. May be involved in regulation of gene expression, nucleoid organization and DNA protection. The protein is Nucleoid-associated protein BT_0257 of Bartonella tribocorum (strain CIP 105476 / IBS 506).